Here is a 335-residue protein sequence, read N- to C-terminus: AA9 family lytic polysaccharide monooxygenase A (335 aa).

A signal peptide spans 1-21 (MSSFITKTVLAALVAAAGVRA). Cu(2+) is bound by residues His22 and His107. Cys77 and Cys196 are disulfide-bonded. The O2 site is built by His182 and Gln191. Tyr193 is a binding site for Cu(2+). Positions 241-335 (PKMNIAGGSS…ARRHARDMMN (95 aa)) are disordered. Residues 251 to 303 (GAAPSTPATPTTGSGSDTPSNTAAPVESAPAESAAPVESAPAAGNGNQNNGGA) show a composition bias toward low complexity. The segment covering 321-335 (CKAKKARRHARDMMN) has biased composition (basic residues).

The protein belongs to the polysaccharide monooxygenase AA9 family. The cofactor is Cu(2+).

Its subcellular location is the secreted. It catalyses the reaction [(1-&gt;4)-beta-D-glucosyl]n+m + reduced acceptor + O2 = 4-dehydro-beta-D-glucosyl-[(1-&gt;4)-beta-D-glucosyl]n-1 + [(1-&gt;4)-beta-D-glucosyl]m + acceptor + H2O.. In terms of biological role, lytic polysaccharide monooxygenase (LPMO) that depolymerizes crystalline and amorphous polysaccharides via the oxidation of scissile alpha- or beta-(1-4)-glycosidic bonds, yielding C1 or C4 oxidation products. Catalysis by LPMOs requires the reduction of the active-site copper from Cu(II) to Cu(I) by a reducing agent and H(2)O(2) or O(2) as a cosubstrate. Is capable of cleaving cellulose, but not chitin. Is also active on tamarind xyloglucan and longer xyloglucan oligosaccharides. Has no activity toward shorter cellooligosaccharides (Glc3-6), as well as toward the xyloglucan-heptamer, birchwood xylan, wheat arabinoxylan, konjac glucomannan, ivory nut mannan, beta-glucan from barley, lichenan from Icelandic moss, starch, and spruce galactoglucomannan. Has unprecedented broad specificity on xyloglucan, cleaving any glycosidicbond in theb-glucan main chain, regardless of xylosyl substitutions. When incubated with a mixture of xyloglucan and cellulose, efficiently attacks the xyloglucan, whereas cellulose conversion is inhibited, suggesting that removal of hemicellulose may be the true function of this LPMO during biomass conversion. The protein is AA9 family lytic polysaccharide monooxygenase A of Gibberella zeae (strain ATCC MYA-4620 / CBS 123657 / FGSC 9075 / NRRL 31084 / PH-1) (Wheat head blight fungus).